The primary structure comprises 90 residues: Probable Fe(2+)-trafficking protein (90 aa).

Belongs to the Fe(2+)-trafficking protein family.

Its function is as follows. Could be a mediator in iron transactions between iron acquisition and iron-requiring processes, such as synthesis and/or repair of Fe-S clusters in biosynthetic enzymes. The sequence is that of Probable Fe(2+)-trafficking protein from Pseudomonas putida (strain W619).